A 169-amino-acid chain; its full sequence is Peptide deformylase 1 (169 aa).

Positions 91 and 133 each coordinate Fe cation. The active site involves Glu134. His137 is a binding site for Fe cation.

Belongs to the polypeptide deformylase family. The cofactor is Fe(2+).

It catalyses the reaction N-terminal N-formyl-L-methionyl-[peptide] + H2O = N-terminal L-methionyl-[peptide] + formate. Its function is as follows. Removes the formyl group from the N-terminal Met of newly synthesized proteins. Requires at least a dipeptide for an efficient rate of reaction. N-terminal L-methionine is a prerequisite for activity but the enzyme has broad specificity at other positions. This is Peptide deformylase 1 from Vibrio cholerae serotype O1 (strain ATCC 39315 / El Tor Inaba N16961).